The sequence spans 408 residues: Glutaryl-CoA dehydrogenase, mitochondrial (408 aa).

The N-terminal 13 residues, 1–13, are a transit peptide targeting the mitochondrion; it reads KGGKTQGRSAKSS. Substrate-binding positions include 107-108 and Ser156; that span reads RS. Residues 147–156, Ser156, and 182–184 contribute to the FAD site; these read FGLTEPNHGS and WIT. At Lys210 the chain carries N6-acetyllysine. 257 to 264 provides a ligand contact to substrate; the sequence is FGCLNNAR. FAD is bound by residues Arg289, Gln300, and 357–361; that span reads DMLGG. The Proton acceptor role is filled by Glu384. Gly385 provides a ligand contact to substrate. FAD contacts are provided by residues Thr386, 386–388, and Phe404; that span reads THD.

Belongs to the acyl-CoA dehydrogenase family. As to quaternary structure, homotetramer. The cofactor is FAD.

Its subcellular location is the mitochondrion matrix. It catalyses the reaction glutaryl-CoA + oxidized [electron-transfer flavoprotein] + 2 H(+) = (2E)-butenoyl-CoA + reduced [electron-transfer flavoprotein] + CO2. Its pathway is amino-acid metabolism; lysine degradation. It functions in the pathway amino-acid metabolism; tryptophan metabolism. Its function is as follows. Catalyzes the oxidative decarboxylation of glutaryl-CoA to crotonyl-CoA and CO(2) in the degradative pathway of L-lysine, L-hydroxylysine, and L-tryptophan metabolism. It uses electron transfer flavoprotein as its electron acceptor. This is Glutaryl-CoA dehydrogenase, mitochondrial (GCDH) from Sus scrofa (Pig).